A 96-amino-acid chain; its full sequence is Co-chaperonin GroES (96 aa).

The protein belongs to the GroES chaperonin family. As to quaternary structure, heptamer of 7 subunits arranged in a ring. Interacts with the chaperonin GroEL.

It is found in the cytoplasm. In terms of biological role, together with the chaperonin GroEL, plays an essential role in assisting protein folding. The GroEL-GroES system forms a nano-cage that allows encapsulation of the non-native substrate proteins and provides a physical environment optimized to promote and accelerate protein folding. GroES binds to the apical surface of the GroEL ring, thereby capping the opening of the GroEL channel. The chain is Co-chaperonin GroES from Haemophilus influenzae (strain ATCC 51907 / DSM 11121 / KW20 / Rd).